A 241-amino-acid polypeptide reads, in one-letter code: Ubiquinone biosynthesis O-methyltransferase (241 aa).

S-adenosyl-L-methionine contacts are provided by Arg-42, Gly-62, Asp-83, and Met-127.

Belongs to the methyltransferase superfamily. UbiG/COQ3 family.

The enzyme catalyses a 3-demethylubiquinol + S-adenosyl-L-methionine = a ubiquinol + S-adenosyl-L-homocysteine + H(+). It carries out the reaction a 3-(all-trans-polyprenyl)benzene-1,2-diol + S-adenosyl-L-methionine = a 2-methoxy-6-(all-trans-polyprenyl)phenol + S-adenosyl-L-homocysteine + H(+). It functions in the pathway cofactor biosynthesis; ubiquinone biosynthesis. O-methyltransferase that catalyzes the 2 O-methylation steps in the ubiquinone biosynthetic pathway. In Pectobacterium atrosepticum (strain SCRI 1043 / ATCC BAA-672) (Erwinia carotovora subsp. atroseptica), this protein is Ubiquinone biosynthesis O-methyltransferase.